Consider the following 721-residue polypeptide: Choline O-acetyltransferase (721 aa).

The Proton acceptor role is filled by H419. Residues 496–508 (GKTF…VSPD), S534, and Q656 contribute to the CoA site.

The protein belongs to the carnitine/choline acetyltransferase family. In terms of assembly, the 54 kDa and 13 kDa chains exist as a heterodimer. Post-translationally, the N-terminus of choline O-acetyltransferase 67 kDa and 54 kDa chains are blocked.

It catalyses the reaction choline + acetyl-CoA = acetylcholine + CoA. In terms of biological role, catalyzes the reversible synthesis of acetylcholine (ACh) from acetyl CoA and choline at cholinergic synapses. The chain is Choline O-acetyltransferase from Drosophila melanogaster (Fruit fly).